The following is a 634-amino-acid chain: Fluorothreonine transaldolase (634 aa).

Residues Y67, H221, and H247 each contribute to the pyridoxal 5'-phosphate site. At K248 the chain carries N6-(pyridoxal phosphate)lysine. Residue R375 coordinates pyridoxal 5'-phosphate. A disordered region spans residues 428 to 456; that stretch reads TGDPASAAGPPARERYAPPTAPAGHPARP.

The protein belongs to the SHMT family. Pyridoxal 5'-phosphate serves as cofactor.

It carries out the reaction fluoroacetaldehyde + L-threonine = 4-fluoro-L-threonine + acetaldehyde. Functionally, transaldolase that catalyzes the final step in 4-fluorothreonine biosynthesis. Mediates a L-threonine/fluoroaceldehyde to 4-fluoro-L-threonine/acetaldehyde crossover reaction. Can also convert chloroacetaldehyde into 4-chloro-L-threonine. Does not use glycine as a substrate. The protein is Fluorothreonine transaldolase of Streptantibioticus cattleyicolor (Streptomyces cattleya).